We begin with the raw amino-acid sequence, 404 residues long: MDSSAGVSPCNSPYGSGLLDVPLKLRPRASHYRARSLVIGGKEHVRALPLGGDAPIPIQTMWKEPLIGADLQSIVDRLLELEQLGCDVVRFAVPDRESAELFVALCARTRMPLVADIHFDYRLALRCMDGPVAKVRINPGNIGVRERVRAVVEKARATGTALRIGVNTGSLPGVVKRAVAARYADGMQSVNARAEALVQTAFAEAAYLDQLHFDRVVLSLKASTVAETVRANELFAQQSDIPLHLGVTEAGPLVSGIVKSTLAFSQLLSRNIGATVRVSLSDSMEHEVLAAREILAECGKRAGGVRLVSCPRCGRIGFDVHAFVRRWQKELFSLKKDITVAVMGCVVNGPGEGKHADLGISGAEDSVIFFKRGKIVRRIQVRDLCADERTRIIDAAFKEELSSL.

[4Fe-4S] cluster contacts are provided by C310, C313, C345, and E352.

It belongs to the IspG family. [4Fe-4S] cluster is required as a cofactor.

The enzyme catalyses (2E)-4-hydroxy-3-methylbut-2-enyl diphosphate + oxidized [flavodoxin] + H2O + 2 H(+) = 2-C-methyl-D-erythritol 2,4-cyclic diphosphate + reduced [flavodoxin]. It functions in the pathway isoprenoid biosynthesis; isopentenyl diphosphate biosynthesis via DXP pathway; isopentenyl diphosphate from 1-deoxy-D-xylulose 5-phosphate: step 5/6. Functionally, converts 2C-methyl-D-erythritol 2,4-cyclodiphosphate (ME-2,4cPP) into 1-hydroxy-2-methyl-2-(E)-butenyl 4-diphosphate. This chain is 4-hydroxy-3-methylbut-2-en-1-yl diphosphate synthase (flavodoxin), found in Treponema pallidum (strain Nichols).